A 217-amino-acid polypeptide reads, in one-letter code: 7-cyano-7-deazaguanine synthase (217 aa).

Residue Phe-10–Leu-20 participates in ATP binding. Positions 185, 194, 197, and 200 each coordinate Zn(2+).

This sequence belongs to the QueC family. As to quaternary structure, homodimer. It depends on Zn(2+) as a cofactor.

The catalysed reaction is 7-carboxy-7-deazaguanine + NH4(+) + ATP = 7-cyano-7-deazaguanine + ADP + phosphate + H2O + H(+). Its pathway is purine metabolism; 7-cyano-7-deazaguanine biosynthesis. In terms of biological role, catalyzes the ATP-dependent conversion of 7-carboxy-7-deazaguanine (CDG) to 7-cyano-7-deazaguanine (preQ(0)). In Streptococcus mutans serotype c (strain ATCC 700610 / UA159), this protein is 7-cyano-7-deazaguanine synthase.